The primary structure comprises 247 residues: Small ribosomal subunit protein uS2 (247 aa).

It belongs to the universal ribosomal protein uS2 family.

This Fusobacterium nucleatum subsp. nucleatum (strain ATCC 25586 / DSM 15643 / BCRC 10681 / CIP 101130 / JCM 8532 / KCTC 2640 / LMG 13131 / VPI 4355) protein is Small ribosomal subunit protein uS2.